Consider the following 430-residue polypeptide: Cytochrome P450 monooxygenase FGSG_15680 (430 aa).

Cys351 contacts heme.

The protein belongs to the cytochrome P450 family. It depends on heme as a cofactor.

It functions in the pathway mycotoxin biosynthesis. Its function is as follows. Cytochrome P450 monooxygenase; part of the gene cluster that mediates the biosynthesis of gramillins A and B, bicyclic lipopeptides that induce cell death in maize leaves but not in wheat leaves. The nonribosomal peptide synthetase GRA1 incorporates respectively a glutamic adic (Glu), a leucine (Leu), a serine (Ser), a hydroxyglutamine (HOGln), a 2-amino decanoic acid, and 2 cysteins (CysB and CysA). The biosynthesis of 2-amino decanoic acid incorporated in gramillins could be initiated by a fatty acid synthase composed of the alpha and beta subunits FGSG_00036 and FGSG_11656. The cytochrome P450 monooxygenase FGSG_15680 could hydroxylate the fatty acid chain. Subsequent oxidation to the ketone by the oxidoreductase FGSG_00048 and transamination by aminotransferase FGSG_00049 could form 2-amino-decanoic acid. On the other hand, FGSG_15680 could also be responsible for the HO-modified glutamine at the gamma-position. Whether hydroxylation occurs on the fully assembled product or on the Gln residue prior to assembly into the gramillins requires further proof. The thioredoxin FGSG_00043 could also be required for the disulfide-bond formation between CysA and CysB. The specific involvement of the remaining proteins from the cluster is more difficult to discern, but could have broader regulatory (FGSG_00040 and FGSG_11657) or enzymatic functions (FGSG_00044 and FGSG_00045). The final C-domain of GRA1 does not possess the expected sequence of a termination CT domain, often implicated in macrocyclization and release of a cyclopeptidein fungal NRPs; and the thioesterase FGSG_00047 may act in concert with the terminal C-domain of GRA1 to catalyze the formation of the macrocyclic anhydride and release of the products. The sequence is that of Cytochrome P450 monooxygenase FGSG_15680 from Gibberella zeae (strain ATCC MYA-4620 / CBS 123657 / FGSC 9075 / NRRL 31084 / PH-1) (Wheat head blight fungus).